The sequence spans 227 residues: uncharacterized protein (227 aa).

7 helical membrane passes run 15-34 (FIAAEALYSSIIFLICFLIY), 55-77 (TFLFLGLAYFLRFVVLLLSASGV), 92-114 (AFSMAFLAYSGSAAILYTIYSLL), 121-140 (FPGEVVINGVALVIALTSLL), 145-167 (LVFLISQLALVFLLVAAIFVNYS), 180-202 (PLYILLFVFWLLNISLTFRFLPL), and 206-224 (FAIYTLSVAVILIIAYRVL).

It is found in the cell membrane. This is an uncharacterized protein from Archaeoglobus fulgidus (strain ATCC 49558 / DSM 4304 / JCM 9628 / NBRC 100126 / VC-16).